Here is a 148-residue protein sequence, read N- to C-terminus: Calmodulin-4 (148 aa).

EF-hand domains are found at residues 8–43 (EEVAEFQAAFNRFDKNKDGHISVEELGDVMKQLGKN), 44–79 (LPEKDLKALISKLDTDGDGKISFEEFLTAIEKYKKG), 80–115 (HRAGELRAVFNVLDQNGDGYITVDELKESLSKLGES), and 116–148 (LSQEELEDMIRVADVDQDGKVKYEEFVRLHVEN). Asp21, Asn23, Asp25, His27, Glu32, Asp57, Asp59, Asp61, Lys63, Glu68, Asp93, Asn95, Asp97, Tyr99, and Glu104 together coordinate Ca(2+).

In terms of biological role, implicated in the early stage of ectopic ossification. This Mus musculus (Mouse) protein is Calmodulin-4 (Calm4).